We begin with the raw amino-acid sequence, 589 residues long: MSVEKLIVDHMETWTSALQTRSTAGRGSSGKIDLYGIKKLRELILELAVRGKLVPQDPNDEPASELLKRIAAEKAELVKQGKIKKQKPLPEISEEEKPFELPDGWEWTTLTRIAEINPKIDVSDDEQEISFIPMPLISTKFDGSHEFEIKKWKDVKKGYTHFANGDIAIAKITPCFENSKAAIFSGLKNGIGVGTTELHVARPFSDIINRKYLLLNFKSPNFLKSGESQMTGSAGQKRVPRFFFENNPIPFPPLQEQERIIIRFTQLMSLCDQLEQQSLTSLDAHQQLVETLLGTLTDSQNVEELAENWARISEHFDTLFTTEASVDALKQTILQLAVMGKLVPQDPNDEPASELLKRIAQEKAQLVKEGKIKKQKPLPPISDEEKPFELPEGWEWCRLGSIYNFLNGYAFKSEWFTSVGLRLLRNANIAHGVTNWKDVVHIPNDMISDFENYILSENDIVISLDRPIINTGLKYAIISKSDLPCLLLQRVAKFKNYANTVSNSFLTIWLQSYFFINSIDPGRSNGVPHISTKQLEMTLFPLLPQSEQDRIISKMDELIQTCNKLKYIIKTAKQTQLHLADALTDAAIN.

The protein belongs to the type-I restriction system S methylase family. As to quaternary structure, the type I restriction/modification system is composed of three polypeptides R, M and S. The restriction enzyme has stoichiometry R(2)M(2)S(1) while the methyltransferase is M(2)S(1).

Its function is as follows. The specificity (S) subunit of a type I restriction enzyme; this subunit dictates DNA sequence specificity. The M and S subunits together form a methyltransferase (MTase) that methylates A-2 on the top strand and A-3 on the bottom strand of the sequence 5'-GAGN(7)GTCA-3'. In the presence of the R subunit the complex can also act as an endonuclease, binding to the same target sequence but cutting the DNA some distance from this site. Whether the DNA is cut or modified depends on the methylation state of the target sequence. When the target site is unmodified, the DNA is cut. When the target site is hemimethylated, the complex acts as a maintenance MTase modifying the DNA so that both strands become methylated. After locating a non-methylated recognition site, the enzyme complex serves as a molecular motor that translocates DNA in an ATP-dependent manner until a collision occurs that triggers cleavage. The protein is Type I restriction enzyme EcoAI specificity subunit of Escherichia coli.